Reading from the N-terminus, the 367-residue chain is uncharacterized protein (367 aa).

An ABC transporter domain is found at 4 to 234 (LTFEHVKKSY…PANLFVAGFI (231 aa)). 36–43 (GPSGCGKS) contacts ATP.

It belongs to the ABC transporter superfamily.

This is an uncharacterized protein from Bacillus subtilis (strain 168).